Consider the following 142-residue polypeptide: Putative pre-16S rRNA nuclease (142 aa).

It belongs to the YqgF nuclease family.

It is found in the cytoplasm. Its function is as follows. Could be a nuclease involved in processing of the 5'-end of pre-16S rRNA. This is Putative pre-16S rRNA nuclease from Lactobacillus delbrueckii subsp. bulgaricus (strain ATCC BAA-365 / Lb-18).